Reading from the N-terminus, the 919-residue chain is Calcium-activated chloride channel regulator 4 (919 aa).

Residues 1–21 form the signal peptide; the sequence is MGLFRGFVFLLVLCLLHQSNT. Residues 45-199 form a metalloprotease domain region; that stretch reads DEKIIEQIED…GISGRNRVYK (155 aa). The N-linked (GlcNAc...) asparagine glycan is linked to Asn-75. His-155 provides a ligand contact to Zn(2+). Glu-156 is a catalytic residue. Positions 159 and 166 each coordinate Zn(2+). Residues 306–476 enclose the VWFA domain; the sequence is IVCLVLDKSG…NGLIDAFGAL (171 aa). Residues Asn-340, Asn-504, Asn-542, Asn-588, Asn-628, Asn-811, Asn-832, Asn-837, and Asn-852 are each glycosylated (N-linked (GlcNAc...) asparagine). The interval 870-893 is disordered; the sequence is ANPDDIDPTPTPTPTPTPDKSHNS. Residues 895 to 915 form a helical membrane-spanning segment; it reads VNISTLVLSVIGSVVIVNFIL.

The protein belongs to the CLCR family. Post-translationally, the translation product is autoproteolytically cleaved by the metalloprotease domain in the endoplasmic reticulum into a N-terminal and a C-terminal products that remain physically associated with each other. The cleavage is necessary for calcium-activated chloride channel (CaCC) activation activity. As to expression, primarily expressed in the digestive tract, mainly in colon. Detected in smaller amounts in brain, urogenital organs, testis, and salivary and mammary glands. Highly expressed in the epithelial layer and submucosal gland of the inferior turbinate mucosa. Lower levels in the epithelial layer of nasal polyp.

The protein localises to the cell membrane. Its subcellular location is the apical cell membrane. The protein resides in the secreted. May be involved in mediating calcium-activated chloride conductance. This Homo sapiens (Human) protein is Calcium-activated chloride channel regulator 4 (CLCA4).